Reading from the N-terminus, the 286-residue chain is MPELPEVEVVRRGLEDHMVGHTIVSATVLHPRAARNQLGGGPEIEANIAGLRVSAAKRRGKFLWLELIDAPSGETRPDLGLLVHLGMSGQMLIKEPDAPISPHLRAKVELDNGDEVWFVDQRTFGYWWLGDLVDGVPERVSHIATDVLDESADFSAIARNLKSRKSEIKRLLLNQEIVSGIGNIYADEMLWQAKIHPLQRADRLSLARLEELLQAGKDVMTKALAQGGTSFDALYVNVNGNSGYFALSLNAYAQTGEPCGRCGTLIIRESFMNRGSHYCPNCQKRR.

The active-site Schiff-base intermediate with DNA is Pro2. Residue Glu3 is the Proton donor of the active site. Catalysis depends on Lys61, which acts as the Proton donor; for beta-elimination activity. Residues His103, Arg122, and Arg164 each coordinate DNA. The segment at 250-284 (NAYAQTGEPCGRCGTLIIRESFMNRGSHYCPNCQK) adopts an FPG-type zinc-finger fold. The active-site Proton donor; for delta-elimination activity is the Arg274.

Belongs to the FPG family. Monomer. It depends on Zn(2+) as a cofactor.

It catalyses the reaction Hydrolysis of DNA containing ring-opened 7-methylguanine residues, releasing 2,6-diamino-4-hydroxy-5-(N-methyl)formamidopyrimidine.. The catalysed reaction is 2'-deoxyribonucleotide-(2'-deoxyribose 5'-phosphate)-2'-deoxyribonucleotide-DNA = a 3'-end 2'-deoxyribonucleotide-(2,3-dehydro-2,3-deoxyribose 5'-phosphate)-DNA + a 5'-end 5'-phospho-2'-deoxyribonucleoside-DNA + H(+). In terms of biological role, involved in base excision repair of DNA damaged by oxidation or by mutagenic agents. Acts as a DNA glycosylase that recognizes and removes damaged bases. Has a preference for oxidized purines, such as 7,8-dihydro-8-oxoguanine (8-oxoG). Has AP (apurinic/apyrimidinic) lyase activity and introduces nicks in the DNA strand. Cleaves the DNA backbone by beta-delta elimination to generate a single-strand break at the site of the removed base with both 3'- and 5'-phosphates. In Corynebacterium glutamicum (strain ATCC 13032 / DSM 20300 / JCM 1318 / BCRC 11384 / CCUG 27702 / LMG 3730 / NBRC 12168 / NCIMB 10025 / NRRL B-2784 / 534), this protein is Formamidopyrimidine-DNA glycosylase.